A 404-amino-acid polypeptide reads, in one-letter code: Argininosuccinate synthase (404 aa).

Position 7 to 15 (7 to 15) interacts with ATP; that stretch reads AYSGGLDTS. Positions 85 and 90 each coordinate L-citrulline. Gly-115 provides a ligand contact to ATP. L-aspartate-binding residues include Thr-117, Asn-121, and Asp-122. Asn-121 contacts L-citrulline. Arg-125, Ser-178, Ser-187, Glu-264, and Tyr-276 together coordinate L-citrulline.

This sequence belongs to the argininosuccinate synthase family. Type 1 subfamily. As to quaternary structure, homotetramer.

Its subcellular location is the cytoplasm. It catalyses the reaction L-citrulline + L-aspartate + ATP = 2-(N(omega)-L-arginino)succinate + AMP + diphosphate + H(+). It participates in amino-acid biosynthesis; L-arginine biosynthesis; L-arginine from L-ornithine and carbamoyl phosphate: step 2/3. This is Argininosuccinate synthase from Rhodopirellula baltica (strain DSM 10527 / NCIMB 13988 / SH1).